We begin with the raw amino-acid sequence, 602 residues long: Mating pair stabilization protein TraN (602 aa).

An N-terminal signal peptide occupies residues 1–18; the sequence is MKRILPLILALVAGMAQA.

Interacts with OmpA of recipient cells. Might form multimers. May interact with TraG. Post-translationally, has higher gel mobility under non-reducing conditions, suggesting it has disulfide bonds; a dsbA deletion mutant has considerably less TraN that is still localized in the outer membrane.

It is found in the cell outer membrane. Functionally, essential for F plasmid conjugative transfer. May interact with the recipient cell surface to stabilize mating pairs initiated by F-pili. May interact with TraG. Transfer requires OmpA and lipopolysaccharide (LPS), which are possibly receptors for TraN. The chain is Mating pair stabilization protein TraN (traN) from Escherichia coli (strain K12).